The sequence spans 303 residues: Elongation factor Ts (303 aa).

Positions 81–84 (TDFV) are involved in Mg(2+) ion dislocation from EF-Tu.

The protein belongs to the EF-Ts family.

It is found in the cytoplasm. Its function is as follows. Associates with the EF-Tu.GDP complex and induces the exchange of GDP to GTP. It remains bound to the aminoacyl-tRNA.EF-Tu.GTP complex up to the GTP hydrolysis stage on the ribosome. The polypeptide is Elongation factor Ts (Mesomycoplasma hyopneumoniae (strain 232) (Mycoplasma hyopneumoniae)).